Here is a 299-residue protein sequence, read N- to C-terminus: Tyrosine recombinase XerC (299 aa).

Residues 1–85 (MERQLEAYCA…AVRGLYRYLN (85 aa)) form the Core-binding (CB) domain. A Tyr recombinase domain is found at 106–285 (RLPKTLDTDR…DFQHLAAVYD (180 aa)). Active-site residues include R146, K170, H237, R240, and H263. Y272 functions as the O-(3'-phospho-DNA)-tyrosine intermediate in the catalytic mechanism.

It belongs to the 'phage' integrase family. XerC subfamily. As to quaternary structure, forms a cyclic heterotetrameric complex composed of two molecules of XerC and two molecules of XerD.

Its subcellular location is the cytoplasm. In terms of biological role, site-specific tyrosine recombinase, which acts by catalyzing the cutting and rejoining of the recombining DNA molecules. The XerC-XerD complex is essential to convert dimers of the bacterial chromosome into monomers to permit their segregation at cell division. It also contributes to the segregational stability of plasmids. The protein is Tyrosine recombinase XerC of Pseudomonas entomophila (strain L48).